Here is a 382-residue protein sequence, read N- to C-terminus: S-adenosylmethionine synthase (382 aa).

Residue His15 coordinates ATP. Asp17 provides a ligand contact to Mg(2+). Glu43 provides a ligand contact to K(+). 2 residues coordinate L-methionine: Glu56 and Gln99. Residues 99–109 are flexible loop; the sequence is QSGDIAQGVDR. Residues 164 to 166, 230 to 231, Asp239, 245 to 246, Ala262, and Lys266 each bind ATP; these read DAK, KF, and RK. Asp239 is a binding site for L-methionine. Residue Lys270 coordinates L-methionine.

Belongs to the AdoMet synthase family. Homotetramer; dimer of dimers. Mg(2+) serves as cofactor. It depends on K(+) as a cofactor.

It is found in the cytoplasm. The enzyme catalyses L-methionine + ATP + H2O = S-adenosyl-L-methionine + phosphate + diphosphate. It participates in amino-acid biosynthesis; S-adenosyl-L-methionine biosynthesis; S-adenosyl-L-methionine from L-methionine: step 1/1. Catalyzes the formation of S-adenosylmethionine (AdoMet) from methionine and ATP. The overall synthetic reaction is composed of two sequential steps, AdoMet formation and the subsequent tripolyphosphate hydrolysis which occurs prior to release of AdoMet from the enzyme. The sequence is that of S-adenosylmethionine synthase from Dichelobacter nodosus (strain VCS1703A).